A 142-amino-acid chain; its full sequence is Large ribosomal subunit protein uL13 (142 aa).

This sequence belongs to the universal ribosomal protein uL13 family. As to quaternary structure, part of the 50S ribosomal subunit.

Its function is as follows. This protein is one of the early assembly proteins of the 50S ribosomal subunit, although it is not seen to bind rRNA by itself. It is important during the early stages of 50S assembly. The polypeptide is Large ribosomal subunit protein uL13 (Acidithiobacillus ferrooxidans (strain ATCC 23270 / DSM 14882 / CIP 104768 / NCIMB 8455) (Ferrobacillus ferrooxidans (strain ATCC 23270))).